Reading from the N-terminus, the 91-residue chain is Probable Fe(2+)-trafficking protein (91 aa).

This sequence belongs to the Fe(2+)-trafficking protein family.

In terms of biological role, could be a mediator in iron transactions between iron acquisition and iron-requiring processes, such as synthesis and/or repair of Fe-S clusters in biosynthetic enzymes. This is Probable Fe(2+)-trafficking protein from Polynucleobacter necessarius subsp. necessarius (strain STIR1).